The chain runs to 229 residues: Transmembrane protein 182 (229 aa).

Positions 1–26 are cleaved as a signal peptide; sequence MRLNIAIFFGALFGALGVLLFLVAFG. Topologically, residues 27 to 114 are extracellular; sequence SDYWLLATEV…SYDSAVIYRG (88 aa). Asn-47 carries an N-linked (GlcNAc...) asparagine glycan. Positions 49–59 are interaction with ITGB1; that stretch reads TFHHEGFFWRC. Asn-102 carries an N-linked (GlcNAc...) asparagine glycan. The chain crosses the membrane as a helical span at residues 115–135; sequence FWAVLMLLGVVAVVIASFLII. The Cytoplasmic segment spans residues 136–153; it reads CAAPFASHFLYKAGGGSY. The helical transmembrane segment at 154–174 threads the bilayer; it reads IAAGILFSLVVMLYVIWVQAV. Residues 175 to 200 are Extracellular-facing; sequence ADMESYRNMKMKDCLDFTPSVLYGWS. The helical transmembrane segment at 201-221 threads the bilayer; sequence FFLAPAGIFFSLLAGLLFLVV. The Cytoplasmic segment spans residues 222–229; sequence GWHIQIHH.

This sequence belongs to the TMEM182 family. In terms of assembly, interacts with ITGB1.

The protein localises to the cell membrane. Negatively regulates myogenesis and skeletal muscle regeneration via its association with ITGB1. Modulates ITGB1 activation by decreasing ITGB1-LAMB1 interaction and inhibiting ITGB1-mediated intracellular signaling during myogenesis. The sequence is that of Transmembrane protein 182 (TMEM182) from Homo sapiens (Human).